The chain runs to 172 residues: Adenine phosphoribosyltransferase (172 aa).

Belongs to the purine/pyrimidine phosphoribosyltransferase family. As to quaternary structure, homodimer.

The protein localises to the cytoplasm. The enzyme catalyses AMP + diphosphate = 5-phospho-alpha-D-ribose 1-diphosphate + adenine. It functions in the pathway purine metabolism; AMP biosynthesis via salvage pathway; AMP from adenine: step 1/1. In terms of biological role, catalyzes a salvage reaction resulting in the formation of AMP, that is energically less costly than de novo synthesis. The polypeptide is Adenine phosphoribosyltransferase (Malacoplasma penetrans (strain HF-2) (Mycoplasma penetrans)).